Consider the following 1254-residue polypeptide: AF4/FMR2 family member 3 (1254 aa).

Residues 45–62 (YEPDRNALRRKERERRSQ) are compositionally biased toward basic and acidic residues. Disordered stretches follow at residues 45–90 (YEPD…GDEL), 139–190 (AESR…AAQQ), 261–324 (RPMD…GENN), 350–534 (EPSK…EGQD), and 552–752 (KTTC…SVGS). Polar residues-rich tracts occupy residues 67–76 (DSGSFNSGYS) and 143–158 (AQPQ…SSTP). The segment covering 359 to 369 (KDSQLVSSGHS) has biased composition (polar residues). Positions 406 to 418 (QQAAQRTALRALA) are enriched in low complexity. A compositionally biased stretch (polar residues) spans 421-433 (SVVQQTNCRGSAP). Over residues 441-472 (SSSSGGSSSSSDSESTSGSDSETESSSSSSES) the composition is skewed to low complexity. The segment covering 552–561 (KTTCKEEQRP) has biased composition (basic and acidic residues). Over residues 577 to 605 (SPPAAVAVTAAALPPAVPSAPTESAPAPT) the composition is skewed to low complexity. A compositionally biased stretch (basic and acidic residues) spans 615–633 (RRTERTSAGDGANCHRPEE). 2 stretches are compositionally biased toward low complexity: residues 694–704 (TESSSSSSSSD) and 732–749 (AASS…SRAS). Phosphoserine is present on Ser782. Positions 813 to 883 (PGVLSAPSAK…ASTNNTLSGN (71 aa)) are disordered. Over residues 857-869 (REIKKVQGRKESA) the composition is skewed to basic and acidic residues. The span at 873 to 883 (AASTNNTLSGN) shows a compositional bias: polar residues. At Ser908 the chain carries Phosphoserine. Disordered regions lie at residues 919-991 (ASED…HRDC) and 1128-1171 (AAQA…SGLS). Composition is skewed to polar residues over residues 922–941 (DLTS…ASSN) and 960–985 (ASHN…SPGS). Composition is skewed to low complexity over residues 1132–1146 (PSPW…GSPS) and 1154–1171 (PASS…SGLS).

This sequence belongs to the AF4 family. As to expression, highest levels found in lymphoid tissues, lower levels in brain and lung.

The protein localises to the nucleus. In terms of biological role, putative transcription activator that may function in lymphoid development and oncogenesis. The chain is AF4/FMR2 family member 3 (Aff3) from Mus musculus (Mouse).